The following is a 438-amino-acid chain: Chromosomal replication initiator protein DnaA (438 aa).

Residues 1 to 74 (MNEINKIWQK…SFYQITGSQV (74 aa)) are domain I, interacts with DnaA modulators. The domain II stretch occupies residues 74-100 (VEVKYIITGKEHETGLIEEKKQVIKKG). Positions 101–317 (NLNPKYTFDT…GSLIKLCAYT (217 aa)) are domain III, AAA+ region. Residues Gly145, Gly147, Lys148, and Thr149 each coordinate ATP. Residues 318–438 (SLTKVPISMD…DSIIKKVTGQ (121 aa)) form a domain IV, binds dsDNA region.

It belongs to the DnaA family. In terms of assembly, oligomerizes as a right-handed, spiral filament on DNA at oriC.

The protein resides in the cytoplasm. In terms of biological role, plays an essential role in the initiation and regulation of chromosomal replication. ATP-DnaA binds to the origin of replication (oriC) to initiate formation of the DNA replication initiation complex once per cell cycle. Binds the DnaA box (a 9 base pair repeat at the origin) and separates the double-stranded (ds)DNA. Forms a right-handed helical filament on oriC DNA; dsDNA binds to the exterior of the filament while single-stranded (ss)DNA is stabiized in the filament's interior. The ATP-DnaA-oriC complex binds and stabilizes one strand of the AT-rich DNA unwinding element (DUE), permitting loading of DNA polymerase. After initiation quickly degrades to an ADP-DnaA complex that is not apt for DNA replication. Binds acidic phospholipids. The chain is Chromosomal replication initiator protein DnaA from Thermodesulfovibrio yellowstonii (strain ATCC 51303 / DSM 11347 / YP87).